Reading from the N-terminus, the 416-residue chain is Phosphatidylinositol 5-phosphate 4-kinase type-2 beta (416 aa).

Ser-2 is modified (N-acetylserine). At Thr-8 the chain carries Phosphothreonine. Ser-19 is modified (phosphoserine). In terms of domain architecture, PIPK spans 38 to 415 (ASEPILSVLM…RFNEFMSNIL (378 aa)). Residues 64-70 (VMLMPDD) form a required for interaction with PIP5K1A region. Lys-94 and Lys-150 each carry N6-acetyllysine. Residues 202–204 (RNV) and Lys-214 contribute to the ATP site. GTP-binding positions include 203-204 (NV) and Lys-214. A Phosphothreonine modification is found at Thr-322. A Phosphoserine modification is found at Ser-326. Asp-369 is a binding site for GTP.

In terms of assembly, homodimer. Binds TNFRSF1A. Interacts with PIP4K2A; the interaction suppresses ubiquitination by the SPOP/CUL3 complex. Post-translationally, ubiquitinated by the SPOP/CUL3 complex. Ubiquitination is stimulated by PtdIns5P levels. In terms of processing, phosphorylated on serine residues. As to expression, highly expressed in brain, heart, pancreas, skeletal muscle and kidney. Detected at lower levels in placenta, lung and liver.

Its subcellular location is the endoplasmic reticulum membrane. The protein localises to the cell membrane. It is found in the nucleus. The protein resides in the cytoplasm. The enzyme catalyses a 1,2-diacyl-sn-glycero-3-phospho-(1D-myo-inositol-5-phosphate) + ATP = a 1,2-diacyl-sn-glycero-3-phospho-(1D-myo-inositol-4,5-bisphosphate) + ADP + H(+). It catalyses the reaction 1,2-dihexadecanoyl-sn-glycero-3-phospho-(1D-myo-inositol-5-phosphate) + ATP = 1,2-dihexadecanoyl-sn-glycero-3-phospho-(1D-myo-inositol-4,5-bisphosphate) + ADP + H(+). The catalysed reaction is 1,2-dihexadecanoyl-sn-glycero-3-phospho-(1D-myo-inositol-5-phosphate) + GTP = 1,2-dihexadecanoyl-sn-glycero-3-phospho-(1D-myo-inositol-4,5-bisphosphate) + GDP + H(+). Participates in the biosynthesis of phosphatidylinositol 4,5-bisphosphate. Preferentially utilizes GTP, rather than ATP, for PI(5)P phosphorylation and its activity reflects changes in direct proportion to the physiological GTP concentration. Its GTP-sensing activity is critical for metabolic adaptation. PIP4Ks negatively regulate insulin signaling through a catalytic-independent mechanism. They interact with PIP5Ks and suppress PIP5K-mediated PtdIns(4,5)P2 synthesis and insulin-dependent conversion to PtdIns(3,4,5)P3. This is Phosphatidylinositol 5-phosphate 4-kinase type-2 beta from Homo sapiens (Human).